A 75-amino-acid chain; its full sequence is Small ribosomal subunit protein eS17 (75 aa).

This sequence belongs to the eukaryotic ribosomal protein eS17 family.

The sequence is that of Small ribosomal subunit protein eS17 from Thermoplasma acidophilum (strain ATCC 25905 / DSM 1728 / JCM 9062 / NBRC 15155 / AMRC-C165).